The following is a 914-amino-acid chain: Caprin-2 (914 aa).

Disordered regions lie at residues 259-283 (PLPK…PSGL), 298-326 (EFLN…KEDF), 367-411 (KTVD…LPKD), 439-480 (DGES…SSQR), 495-529 (CLSN…PPLY), 608-631 (HRSF…PELN), and 718-747 (GAGT…AYPL). Basic and acidic residues predominate over residues 264-273 (DSQEKTETIK). Positions 274 to 283 (PDSQSRPSGL) are enriched in polar residues. Residues 370-392 (DIVKRSTTDPKEKRQRKKAEQDS) show a composition bias toward basic and acidic residues. Over residues 469–480 (KSPSDILPSSQR) the composition is skewed to polar residues. The segment covering 508–520 (LELHSEDKPRKQA) has biased composition (basic and acidic residues). Residues 610-626 (SFTSAKTSSVTTASTQT) are compositionally biased toward low complexity. Over residues 718-738 (GAGTATQRSSAGWSDSSQVSS) the composition is skewed to polar residues. The 135-residue stretch at 780-914 (LTQLRVAFSA…TFSGFLLYQD (135 aa)) folds into the C1q domain. The Ca(2+) site is built by Asp-865 and Glu-871.

It belongs to the caprin family. In terms of assembly, homotrimer; via C1q domain.

The protein localises to the cytoplasm. The protein resides in the cell membrane. Promotes phosphorylation of the Wnt coreceptor LRP6, leading to increased activity of the canonical Wnt signaling pathway. Facilitates constitutive LRP6 phosphorylation by CDK14/CCNY during G2/M stage of the cell cycle, which may potentiate cells for Wnt signaling. May regulate the transport and translation of mRNAs, modulating for instance the expression of proteins involved in synaptic plasticity in neurons. Involved in regulation of growth as erythroblasts shift from a highly proliferative state towards their terminal phase of differentiation. May be involved in apoptosis. The sequence is that of Caprin-2 from Danio rerio (Zebrafish).